Reading from the N-terminus, the 78-residue chain is Cytochrome c-551 (78 aa).

Heme c-binding residues include cysteine 14, cysteine 17, histidine 18, and methionine 55.

Post-translationally, binds 1 heme c group covalently per subunit.

The sequence is that of Cytochrome c-551 from Halorhodospira halophila (Ectothiorhodospira halophila).